The primary structure comprises 414 residues: Poly(3-hydroxyalkanoate) depolymerase C (414 aa).

Residues 1–37 (MLAKQIKKANSRSTLLRKSLLFAAPIILAVSSSSVYA) form the signal peptide. Ser-154 serves as the catalytic Charge relay system.

The protein belongs to the AB hydrolase superfamily. Lipase family.

It is found in the secreted. In terms of biological role, specific for poly(hydroxyalkanoic acid) consisting of monomers of four or five carbon atoms and for P-nitrophenylbutyrate as substrates. In Paucimonas lemoignei (Pseudomonas lemoignei), this protein is Poly(3-hydroxyalkanoate) depolymerase C (phaZ1).